Here is a 493-residue protein sequence, read N- to C-terminus: Glutamate--tRNA ligase (493 aa).

The short motif at 10–20 (PSPTGDPHVGT) is the 'HIGH' region element. Residues 251-255 (KLSKR) carry the 'KMSKS' region motif. Lys254 contributes to the ATP binding site.

It belongs to the class-I aminoacyl-tRNA synthetase family. Glutamate--tRNA ligase type 1 subfamily. Monomer.

Its subcellular location is the cytoplasm. It catalyses the reaction tRNA(Glu) + L-glutamate + ATP = L-glutamyl-tRNA(Glu) + AMP + diphosphate. Catalyzes the attachment of glutamate to tRNA(Glu) in a two-step reaction: glutamate is first activated by ATP to form Glu-AMP and then transferred to the acceptor end of tRNA(Glu). The chain is Glutamate--tRNA ligase from Pseudomonas putida (strain W619).